The following is a 563-amino-acid chain: Arginine--tRNA ligase (563 aa).

The 'HIGH' region signature appears at Pro-121–His-131.

Belongs to the class-I aminoacyl-tRNA synthetase family. In terms of assembly, monomer.

Its subcellular location is the cytoplasm. It carries out the reaction tRNA(Arg) + L-arginine + ATP = L-arginyl-tRNA(Arg) + AMP + diphosphate. In Streptococcus pneumoniae serotype 19F (strain G54), this protein is Arginine--tRNA ligase.